The primary structure comprises 164 residues: Oocyte-expressed protein homolog (164 aa).

Residues P44–L105 enclose the KH; atypical domain.

The protein belongs to the KHDC1 family. Component of the subcortical maternal complex (SCMC), at least composed of NLRP5, KHDC3, OOEP, and TLE6. Within the complex, interacts with NLRP5, KHDC3 and TLE6. The SCMC may facilitate translocation of its components between the nuclear and cytoplasmic compartments. As part of the SCMC interacts with the SCMC-associated protein NLRP4F. Forms a scaffold complex with KHDC3/FILIA, and interacts with BLM and TRIM25 at DNA replication forks. In terms of tissue distribution, expressed in ovaries, where it is restricted to growing oocytes, with greatest levels in fully grown oocytes.

The protein resides in the cytoplasm. It localises to the nucleus. Its function is as follows. Component of the subcortical maternal complex (SCMC), a multiprotein complex that plays a key role in early embryonic development. The SCMC complex is a structural constituent of cytoplasmic lattices, which consist in fibrous structures found in the cytoplasm of oocytes and preimplantation embryos. They are required to store maternal proteins critical for embryonic development, such as proteins that control epigenetic reprogramming of the preimplantation embryo, and prevent their degradation or activation. As part of the OOEP-KHDC3 scaffold, recruits BLM and TRIM25 to DNA replication forks, thereby promoting the ubiquitination of BLM by TRIM25, enhancing BLM retainment at replication forks and therefore promoting stalled replication fork restart. Positively regulates the homologous recombination-mediated DNA double-strand break (DSB) repair pathway by regulating ATM activation and RAD51 recruitment to DSBs in oocytes. Thereby contributes to oocyte survival and the resumption and completion of meiosis. The protein is Oocyte-expressed protein homolog of Mus musculus (Mouse).